The following is a 289-amino-acid chain: Oxaloacetate decarboxylase (289 aa).

Ser50 provides a ligand contact to substrate. Position 88 (Asp88) interacts with Mg(2+). Substrate contacts are provided by Arg159 and His235.

Belongs to the isocitrate lyase/PEP mutase superfamily. Oxaloacetate decarboxylase family. In terms of assembly, homotetramer; dimer of dimers. Requires Mg(2+) as cofactor.

It carries out the reaction oxaloacetate + H(+) = pyruvate + CO2. In terms of biological role, catalyzes the decarboxylation of oxaloacetate into pyruvate. Seems to play a role in maintaining cellular concentrations of bicarbonate and pyruvate. The sequence is that of Oxaloacetate decarboxylase from Pseudomonas putida (strain ATCC 47054 / DSM 6125 / CFBP 8728 / NCIMB 11950 / KT2440).